Consider the following 514-residue polypeptide: 2,3-bisphosphoglycerate-independent phosphoglycerate mutase (514 aa).

Residues Asp-14 and Ser-64 each contribute to the Mn(2+) site. Ser-64 serves as the catalytic Phosphoserine intermediate. Substrate is bound by residues His-125, 155–156, Arg-187, Arg-193, 263–266, and Lys-336; these read RD and RADR. 5 residues coordinate Mn(2+): Asp-403, His-407, Asp-444, His-445, and His-463.

Belongs to the BPG-independent phosphoglycerate mutase family. Monomer. Mn(2+) is required as a cofactor.

It carries out the reaction (2R)-2-phosphoglycerate = (2R)-3-phosphoglycerate. Its pathway is carbohydrate degradation; glycolysis; pyruvate from D-glyceraldehyde 3-phosphate: step 3/5. Its function is as follows. Catalyzes the interconversion of 2-phosphoglycerate and 3-phosphoglycerate. In Escherichia coli O1:K1 / APEC, this protein is 2,3-bisphosphoglycerate-independent phosphoglycerate mutase.